The sequence spans 619 residues: 1-deoxy-D-xylulose-5-phosphate synthase (619 aa).

Thiamine diphosphate-binding positions include His74 and 115-117 (GHS). Mg(2+) is bound at residue Asp146. Thiamine diphosphate is bound by residues 147–148 (GA), Asn175, Tyr285, and Glu365. Residue Asn175 coordinates Mg(2+).

The protein belongs to the transketolase family. DXPS subfamily. Homodimer. It depends on Mg(2+) as a cofactor. The cofactor is thiamine diphosphate.

The enzyme catalyses D-glyceraldehyde 3-phosphate + pyruvate + H(+) = 1-deoxy-D-xylulose 5-phosphate + CO2. It functions in the pathway metabolic intermediate biosynthesis; 1-deoxy-D-xylulose 5-phosphate biosynthesis; 1-deoxy-D-xylulose 5-phosphate from D-glyceraldehyde 3-phosphate and pyruvate: step 1/1. Its function is as follows. Catalyzes the acyloin condensation reaction between C atoms 2 and 3 of pyruvate and glyceraldehyde 3-phosphate to yield 1-deoxy-D-xylulose-5-phosphate (DXP). The chain is 1-deoxy-D-xylulose-5-phosphate synthase from Clostridium perfringens (strain 13 / Type A).